We begin with the raw amino-acid sequence, 850 residues long: Bifunctional levopimaradiene synthase, chloroplastic (850 aa).

Residues 1-52 (MALPSSSLSSQIHTGATTQCIPHFHGSLNAGTSAGKRRSLYLRWGKGPSKIV) constitute a chloroplast transit peptide. A substrate-binding site is contributed by lysine 250. Positions 383 and 385 each coordinate Mg(2+). A DXDD motif motif is present at residues 383-386 (DIDD). Lysine 470 lines the substrate pocket. Mg(2+)-binding residues include aspartate 602, aspartate 606, asparagine 746, threonine 750, and glutamate 754. Residues 602–606 (DDLYD) carry the DDXXD motif motif.

Belongs to the terpene synthase family. Tpsd subfamily. Mg(2+) serves as cofactor. In terms of tissue distribution, expressed in young tissues such as flushing buds and green bark tissues. Lower levels in mature needles and bark.

The protein localises to the plastid. Its subcellular location is the chloroplast. The enzyme catalyses (2E,6E,10E)-geranylgeranyl diphosphate = (+)-copalyl diphosphate. The catalysed reaction is (+)-copalyl diphosphate = abieta-8(14),12-diene + diphosphate. It catalyses the reaction (+)-copalyl diphosphate = neoabietadiene + diphosphate. It functions in the pathway terpene metabolism; oleoresin biosynthesis. In terms of biological role, involved in defensive oleoresin formation in conifers in response to insect attack or other injury. Involved in diterpene (C20) olefins biosynthesis. Bifunctional enzyme that catalyzes two sequential cyclizations of geranylgeranyl diphosphate (GGPP) to levopimaradiene. Levopimaradiene is the major products of the enzyme followed by abietadiene, neoabietadiene and palustradiene. No activity with geranyl diphosphate (GPP) or farnesyl diphosphate (FPP) as substrate. In Pinus taeda (Loblolly pine), this protein is Bifunctional levopimaradiene synthase, chloroplastic (LPS).